Consider the following 239-residue polypeptide: Norbelladine 4'-O-methyltransferase 2 (239 aa).

Residues Val-55, Glu-77, 79–80 (GV), Ser-85, Asp-103, and Ala-132 each bind S-adenosyl-L-methionine. Residue Asp-155 coordinates a divalent metal cation. Asp-157 contributes to the S-adenosyl-L-methionine binding site. The a divalent metal cation site is built by Asp-181 and Asn-182.

Belongs to the class I-like SAM-binding methyltransferase superfamily. Cation-dependent O-methyltransferase family. Mg(2+) is required as a cofactor.

The catalysed reaction is norbelladine + S-adenosyl-L-methionine = 4'-O-methylnorbelladine + S-adenosyl-L-homocysteine + H(+). Its pathway is alkaloid biosynthesis. 4'-O-methyltransferase converting norbelladine to 4'-O-methylnorbelladine. 4'-O-methylnorbelladine is a precursor to all Amaryllidaceae alkaloids such as galanthamine, lycorine and haemanthamine, and including haemanthamine- and crinamine-type alkaloids, promising anticancer agents. This chain is Norbelladine 4'-O-methyltransferase 2, found in Narcissus aff. pseudonarcissus MK-2014 (Daffodil).